A 327-amino-acid chain; its full sequence is Asnovolin J 5',6'-dehydrogenase nvfM (327 aa).

The chain crosses the membrane as a helical span at residues 9–29 (VAIVGASGVTGGSIVNGLLAL). Residues 13–19 (GASGVTG) and K47 each bind NADP(+). The Proton acceptor role is filled by K130.

It belongs to the NmrA-type oxidoreductase family.

It is found in the membrane. The enzyme catalyses asnovolin K + AH2 = asnovolin A + A. It carries out the reaction chermesin D methyl ester + AH2 = asnovolin J + A. The protein operates within secondary metabolite biosynthesis; terpenoid biosynthesis. Functionally, asnovolin J 5',6'-dehydrogenase; part of the gene cluster that mediates the biosynthesis of novofumigatonin, a heavily oxygenated meroterpenoid containing a unique orthoester moiety. The first step of the pathway is the synthesis of 3,5-dimethylorsellinic acid (DMOA) by the polyketide synthase nvfA via condensation of one acetyl-CoA starter unit with 3 malonyl-CoA units and 2 methylations. DMOA is then converted to farnesyl-DMOA by the farnesyltransferase nvfB. Epoxydation by FAD-dependent monooxygenase nvfK, followed by a protonation-initiated cyclization catalyzed by the terpene cyclase nvfL leads to the production of asnavolin H. The short chain dehydrogenase nvfC then as a 3-OH dehydrogenase of asnovolin H to yield chemesin D. There are two branches to synthesize asnovolin A from chemesin D. In one branch, chemesin D undergoes Baeyer-Villiger oxidation by nvfH, methylation by nvfJ, and enoyl reduction by the nvfM D enoylreductase that reduces the double bond between C-5'and C-6', to form respectively asnovolin I, asnovolin K, and asnovolin A. In the other branch, the methylation precedes the Baeyer-Villiger oxidation and the enoyl reduction to yield asnovolin A via the asnovolin J intermediate. Asnovolin A is further converted to fumigatonoid A by the Fe(II)/2-oxoglutarate-dependent dioxygenase nvfI that catalyzes an endoperoxidation reaction. The alpha/beta hydrolase nvfD then acts as an epimerase that converts fumigatonoid A to its C-5' epimer, which then undergoes spontaneous or nvfD-catalyzed lactonization. The following step utilizes the ketoreductase nvfG to produce fumigatonoid B. The dioxygenase nvfE further converts fumigatonoid B into fumigatonoid C. Finally the Fe(II)/2-oxoglutarate-dependent dioxygenase nvfF catalyzes two rounds of oxidation to transform fumigatonoid C into the end product, novofumigatonin A. The polypeptide is Asnovolin J 5',6'-dehydrogenase nvfM (Aspergillus novofumigatus (strain IBT 16806)).